The sequence spans 118 residues: Large ribosomal subunit protein uL24 (118 aa).

The protein belongs to the universal ribosomal protein uL24 family. Part of the 50S ribosomal subunit.

Its function is as follows. One of two assembly initiator proteins, it binds directly to the 5'-end of the 23S rRNA, where it nucleates assembly of the 50S subunit. Functionally, one of the proteins that surrounds the polypeptide exit tunnel on the outside of the subunit. The polypeptide is Large ribosomal subunit protein uL24 (Prochlorococcus marinus (strain SARG / CCMP1375 / SS120)).